Here is a 106-residue protein sequence, read N- to C-terminus: uncharacterized protein (106 aa).

Residues 1–22 form the signal peptide; that stretch reads MKKHPNLLLGFSVYLSAGTKLT. The disordered stretch occupies residues 23–46; it reads IPPEAEQHTAPSDNNKRKRAKCDD.

This is an uncharacterized protein from Arabidopsis thaliana (Mouse-ear cress).